The sequence spans 123 residues: Small ribosomal subunit protein uS12 (123 aa).

Aspartate 89 bears the 3-methylthioaspartic acid mark.

The protein belongs to the universal ribosomal protein uS12 family. As to quaternary structure, part of the 30S ribosomal subunit. Contacts proteins S8 and S17. May interact with IF1 in the 30S initiation complex.

With S4 and S5 plays an important role in translational accuracy. In terms of biological role, interacts with and stabilizes bases of the 16S rRNA that are involved in tRNA selection in the A site and with the mRNA backbone. Located at the interface of the 30S and 50S subunits, it traverses the body of the 30S subunit contacting proteins on the other side and probably holding the rRNA structure together. The combined cluster of proteins S8, S12 and S17 appears to hold together the shoulder and platform of the 30S subunit. The polypeptide is Small ribosomal subunit protein uS12 (Syntrophobacter fumaroxidans (strain DSM 10017 / MPOB)).